Consider the following 450-residue polypeptide: Adenylosuccinate lyase (450 aa).

Residues 9–10 (RY), 75–77 (HHD), and 101–102 (TS) each bind N(6)-(1,2-dicarboxyethyl)-AMP. The active-site Proton donor/acceptor is His-149. Gln-223 provides a ligand contact to N(6)-(1,2-dicarboxyethyl)-AMP. The active-site Proton donor/acceptor is Ser-273. N(6)-(1,2-dicarboxyethyl)-AMP contacts are provided by residues Ser-274, 279 to 281 (KRN), and 318 to 322 (SVERV).

It belongs to the lyase 1 family. Adenylosuccinate lyase subfamily. Homotetramer. Residues from neighboring subunits contribute catalytic and substrate-binding residues to each active site.

The catalysed reaction is N(6)-(1,2-dicarboxyethyl)-AMP = fumarate + AMP. The enzyme catalyses (2S)-2-[5-amino-1-(5-phospho-beta-D-ribosyl)imidazole-4-carboxamido]succinate = 5-amino-1-(5-phospho-beta-D-ribosyl)imidazole-4-carboxamide + fumarate. The protein operates within purine metabolism; AMP biosynthesis via de novo pathway; AMP from IMP: step 2/2. It participates in purine metabolism; IMP biosynthesis via de novo pathway; 5-amino-1-(5-phospho-D-ribosyl)imidazole-4-carboxamide from 5-amino-1-(5-phospho-D-ribosyl)imidazole-4-carboxylate: step 2/2. Its function is as follows. Catalyzes two reactions in de novo purine nucleotide biosynthesis. Catalyzes the breakdown of 5-aminoimidazole- (N-succinylocarboxamide) ribotide (SAICAR or 2-[5-amino-1-(5-phospho-beta-D-ribosyl)imidazole-4-carboxamido]succinate) to 5-aminoimidazole-4-carboxamide ribotide (AICAR or 5-amino-1-(5-phospho-beta-D-ribosyl)imidazole-4-carboxamide) and fumarate, and of adenylosuccinate (ADS or N(6)-(1,2-dicarboxyethyl)-AMP) to adenosine monophosphate (AMP) and fumarate. The polypeptide is Adenylosuccinate lyase (purB) (Pyrococcus abyssi (strain GE5 / Orsay)).